Consider the following 204-residue polypeptide: UPF0637 protein SA0957 (204 aa).

Belongs to the UPF0637 family.

The chain is UPF0637 protein SA0957 from Staphylococcus aureus (strain N315).